We begin with the raw amino-acid sequence, 576 residues long: Arginine--tRNA ligase (576 aa).

Residues 122–132 carry the 'HIGH' region motif; the sequence is PNVAKEMHVGH.

Belongs to the class-I aminoacyl-tRNA synthetase family. In terms of assembly, monomer.

The protein localises to the cytoplasm. The catalysed reaction is tRNA(Arg) + L-arginine + ATP = L-arginyl-tRNA(Arg) + AMP + diphosphate. The sequence is that of Arginine--tRNA ligase from Serratia proteamaculans (strain 568).